A 193-amino-acid polypeptide reads, in one-letter code: Ion-translocating oxidoreductase complex subunit A (193 aa).

A run of 6 helical transmembrane segments spans residues Leu-5 to Leu-25, Met-39 to Ile-59, Ile-63 to Val-83, Leu-102 to Leu-122, Ala-134 to Ile-154, and Ala-171 to Val-191.

This sequence belongs to the NqrDE/RnfAE family. In terms of assembly, the complex is composed of six subunits: RsxA, RsxB, RsxC, RsxD, RsxE and RsxG.

The protein localises to the cell inner membrane. Its function is as follows. Part of a membrane-bound complex that couples electron transfer with translocation of ions across the membrane. Required to maintain the reduced state of SoxR. This chain is Ion-translocating oxidoreductase complex subunit A, found in Shigella boydii serotype 18 (strain CDC 3083-94 / BS512).